The primary structure comprises 582 residues: 2-isopropylmalate synthase (582 aa).

In terms of domain architecture, Pyruvate carboxyltransferase spans 40–314 (PRWCAVDLRD…DPMIDFSDID (275 aa)). Mg(2+) contacts are provided by D49, H253, H255, and N289. The interval 456 to 582 (SPAGHPGGQW…NRAIRDNQVD (127 aa)) is regulatory domain.

Belongs to the alpha-IPM synthase/homocitrate synthase family. LeuA type 2 subfamily. As to quaternary structure, homodimer. Requires Mg(2+) as cofactor.

It is found in the cytoplasm. It catalyses the reaction 3-methyl-2-oxobutanoate + acetyl-CoA + H2O = (2S)-2-isopropylmalate + CoA + H(+). It participates in amino-acid biosynthesis; L-leucine biosynthesis; L-leucine from 3-methyl-2-oxobutanoate: step 1/4. Its function is as follows. Catalyzes the condensation of the acetyl group of acetyl-CoA with 3-methyl-2-oxobutanoate (2-ketoisovalerate) to form 3-carboxy-3-hydroxy-4-methylpentanoate (2-isopropylmalate). This Renibacterium salmoninarum (strain ATCC 33209 / DSM 20767 / JCM 11484 / NBRC 15589 / NCIMB 2235) protein is 2-isopropylmalate synthase.